The following is a 137-amino-acid chain: Protein E6 (137 aa).

2 zinc fingers span residues 17–53 (CLWC…CTIC) and 90–127 (CCYC…CYDC).

This sequence belongs to the papillomaviridae E6 protein family. In terms of assembly, forms homodimers. Interacts with ubiquitin-protein ligase UBE3A/E6-AP; this interaction stimulates UBE3A ubiquitin activity. Interacts with host BAK1. Interacts with human FBLN1.

It is found in the host cytoplasm. It localises to the host nucleus. Its function is as follows. Plays a major role in the induction and maintenance of cellular transformation. E6 associates with host UBE3A/E6-AP ubiquitin-protein ligase and modulates its activity. Protects host keratinocytes from apoptosis by mediating the degradation of host BAK1. May also inhibit host immune response. In Bos taurus (Bovine), this protein is Protein E6.